Consider the following 308-residue polypeptide: HPr kinase/phosphorylase (308 aa).

Catalysis depends on residues His138 and Lys159. 153-160 (GESGLGKS) lines the ATP pocket. Ser160 serves as a coordination point for Mg(2+). Asp177 acts as the Proton acceptor; for phosphorylation activity. Proton donor; for dephosphorylation activity in catalysis. Residues 201–210 (LEVRGLGLLD) are important for the catalytic mechanism of both phosphorylation and dephosphorylation. Glu202 is a Mg(2+) binding site. The active site involves Arg243. The important for the catalytic mechanism of dephosphorylation stretch occupies residues 264–269 (QVAAGR).

This sequence belongs to the HPrK/P family. Homohexamer. Requires Mg(2+) as cofactor.

The enzyme catalyses [HPr protein]-L-serine + ATP = [HPr protein]-O-phospho-L-serine + ADP + H(+). The catalysed reaction is [HPr protein]-O-phospho-L-serine + phosphate + H(+) = [HPr protein]-L-serine + diphosphate. Catalyzes the ATP- as well as the pyrophosphate-dependent phosphorylation of a specific serine residue in HPr, a phosphocarrier protein of the phosphoenolpyruvate-dependent sugar phosphotransferase system (PTS). HprK/P also catalyzes the pyrophosphate-producing, inorganic phosphate-dependent dephosphorylation (phosphorolysis) of seryl-phosphorylated HPr (P-Ser-HPr). This chain is HPr kinase/phosphorylase, found in Bordetella pertussis (strain Tohama I / ATCC BAA-589 / NCTC 13251).